We begin with the raw amino-acid sequence, 126 residues long: Cystatin-like cysteine protease inhibitor EPIC1 (126 aa).

A signal peptide spans 1–21; that stretch reads MTFLRPILALLAATALVTTSA. Asn-46 carries N-linked (GlcNAc...) asparagine glycosylation. The short motif at 69-73 is the Secondary area of contact element; the sequence is QVVSG.

It belongs to the cystatin family. As to quaternary structure, interacts with the host papain-like cysteine protease RCR3. Interacts with the host papain-like cysteine protease C14.

It localises to the secreted. In terms of biological role, secreted effector that interacts with and inhibits the pathogenesis-related papain-like cysteine proteases C14 and RCR3 of host plants. Inhibition of host proteases by a pathogen extracellular protease inhibitor forms a specific type of defense-counterdefense mechanism between plants and microbial pathogens. The chain is Cystatin-like cysteine protease inhibitor EPIC1 from Phytophthora infestans (Potato late blight agent).